The chain runs to 469 residues: UDP-N-acetylmuramoylalanine--D-glutamate ligase (469 aa).

Position 123–129 (123–129) interacts with ATP; sequence GTNGKST.

This sequence belongs to the MurCDEF family.

The protein resides in the cytoplasm. It carries out the reaction UDP-N-acetyl-alpha-D-muramoyl-L-alanine + D-glutamate + ATP = UDP-N-acetyl-alpha-D-muramoyl-L-alanyl-D-glutamate + ADP + phosphate + H(+). The protein operates within cell wall biogenesis; peptidoglycan biosynthesis. Cell wall formation. Catalyzes the addition of glutamate to the nucleotide precursor UDP-N-acetylmuramoyl-L-alanine (UMA). In Phenylobacterium zucineum (strain HLK1), this protein is UDP-N-acetylmuramoylalanine--D-glutamate ligase.